The chain runs to 397 residues: Tryptophan synthase beta chain (397 aa).

Lys-87 carries the N6-(pyridoxal phosphate)lysine modification.

Belongs to the TrpB family. In terms of assembly, tetramer of two alpha and two beta chains. Requires pyridoxal 5'-phosphate as cofactor.

It catalyses the reaction (1S,2R)-1-C-(indol-3-yl)glycerol 3-phosphate + L-serine = D-glyceraldehyde 3-phosphate + L-tryptophan + H2O. It functions in the pathway amino-acid biosynthesis; L-tryptophan biosynthesis; L-tryptophan from chorismate: step 5/5. Its function is as follows. The beta subunit is responsible for the synthesis of L-tryptophan from indole and L-serine. The chain is Tryptophan synthase beta chain from Escherichia fergusonii (strain ATCC 35469 / DSM 13698 / CCUG 18766 / IAM 14443 / JCM 21226 / LMG 7866 / NBRC 102419 / NCTC 12128 / CDC 0568-73).